A 796-amino-acid polypeptide reads, in one-letter code: RalBP1-associated Eps domain-containing protein 1 (796 aa).

The EH 1 domain maps to 10–113; sequence EQKYYSDLFS…SKNEQESRHA (104 aa). Residues 105 to 237 are disordered; the sequence is KNEQESRHAA…ENWVSFADTP (133 aa). Residues 115–126 are compositionally biased toward polar residues; it reads SYSSDSENQGSY. Phosphoserine occurs at positions 143, 145, 162, 166, and 170. Residues 145-156 show a composition bias toward polar residues; that stretch reads SHDTVQPRTSAD. Threonine 173 is modified (phosphothreonine). Serine 272 and serine 273 each carry phosphoserine. The 90-residue stretch at 285-374 folds into the EH 2 domain; sequence QRQYYVNQFK…ESLMPKLIDL (90 aa). Tyrosine 288 carries the phosphotyrosine modification. The residue at position 307 (serine 307) is a Phosphoserine. In terms of domain architecture, EF-hand spans 318 to 353; the sequence is LPILELSHIWELSDFDKDGALTLDEFCAAFHLVVAR. Positions 331, 333, 335, and 342 each coordinate Ca(2+). Residues 377 to 433 form a disordered region; it reads SADVGDQPGEVGYSGSPAEAPPSKSPSMPSLNQTWPELNQSSEQWETFSERSSSSQT. Residues 407–433 are compositionally biased toward polar residues; it reads LNQTWPELNQSSEQWETFSERSSSSQT. Phosphoserine occurs at positions 475, 482, 489, and 540. Over residues 506-543 the composition is skewed to polar residues; it reads GNTVADGYSSSDSFTSDPEQIGSNVTRQRSHSGTSPDN. 2 disordered regions span residues 506-624 and 638-725; these read GNTV…IPEQ and ASNV…QKTG. Position 544 is a phosphothreonine (threonine 544). Residues 544–554 are compositionally biased toward pro residues; that stretch reads TAPPPPPPRPQ. At serine 562 the chain carries Phosphoserine. Positions 563–574 are enriched in polar residues; that stretch reads LDMNRTFTVTTG. Positions 575 to 584 are enriched in low complexity; that stretch reads QQQAGVVAHP. Pro residues predominate over residues 585–596; that stretch reads PAVPPRPQPSQA. The span at 612 to 623 shows a compositional bias: polar residues; sequence THTSTSPQQIPE. The interval 652-796 is interaction with RALBP1; the sequence is HPEVLPAEKA…LEQLRPFSHL (145 aa). Basic and acidic residues-rich tracts occupy residues 671–681 and 708–722; these read AKTDSKTEEKT and KSEDELRPEVDEHTQ. Residues serine 709 and serine 740 each carry the phosphoserine modification. The stretch at 751 to 791 forms a coiled coil; the sequence is SIRRNKETNTVLARLNSELQQQLKDVLEERISLEVQLEQLR.

As to quaternary structure, homodimer (Potential). Interacts with RAB11FIP2. Interacts with RALBP1, CRK and GRB2. Binding to RALBP1 does not affect its Ral-binding activity. Forms a complex with the SH3 domains of CRK and GRB2 which may link it to an EGF-responsive tyrosine kinase. Interacts with AMPH, ITSN1 (via SH3 domains) and SGIP1; may be involved in clathrin-mediated endocytosis. Post-translationally, EGF stimulates phosphorylation on Tyr-residues. In terms of tissue distribution, widely expressed with highest levels in heart and testis.

The protein localises to the membrane. It localises to the clathrin-coated pit. Functionally, may coordinate the cellular actions of activated EGF receptors and Ral-GTPases. The polypeptide is RalBP1-associated Eps domain-containing protein 1 (REPS1) (Homo sapiens (Human)).